Reading from the N-terminus, the 429-residue chain is Ribosomal RNA small subunit methyltransferase B (429 aa).

S-adenosyl-L-methionine is bound by residues C254–K260, D277, D303, and D322. Residue C375 is the Nucleophile of the active site.

The protein belongs to the class I-like SAM-binding methyltransferase superfamily. RsmB/NOP family.

The protein localises to the cytoplasm. It carries out the reaction cytidine(967) in 16S rRNA + S-adenosyl-L-methionine = 5-methylcytidine(967) in 16S rRNA + S-adenosyl-L-homocysteine + H(+). Functionally, specifically methylates the cytosine at position 967 (m5C967) of 16S rRNA. This Escherichia coli O7:K1 (strain IAI39 / ExPEC) protein is Ribosomal RNA small subunit methyltransferase B.